Reading from the N-terminus, the 612-residue chain is Phragmoplastin DRP1D (612 aa).

Residue Met-1 is modified to N-acetylmethionine. The 270-residue stretch at 32 to 301 (WEALPSVAVV…LESVIRSRIP (270 aa)) folds into the Dynamin-type G domain. The segment at 42–49 (GGQSSGKS) is G1 motif. Position 45–50 (45–50 (SSGKSS)) interacts with GTP. Residues 68–70 (VTR) form a G2 motif region. Residues 143–146 (DLPG) form a G3 motif region. The tract at residues 212-215 (TKLD) is G4 motif. Residues 213 to 218 (KLDLMD) and 243 to 246 (NRSQ) each bind GTP. The interval 242–245 (VNRS) is G5 motif. One can recognise a GED domain in the interval 520-612 (FRKIASNVAA…DEIDAAVWVR (93 aa)).

The protein belongs to the TRAFAC class dynamin-like GTPase superfamily. Dynamin/Fzo/YdjA family. Forms homodimer and may homooligomerize and heterooligomerize to form the phragmoplastin complex. Binds to PHIP1.

It is found in the cytoplasm. It localises to the cytoskeleton. The catalysed reaction is GTP + H2O = GDP + phosphate + H(+). Putative microtubule-associated force-producing protein. Has a GTPase activity. This chain is Phragmoplastin DRP1D, found in Arabidopsis thaliana (Mouse-ear cress).